The following is a 2410-amino-acid chain: Genome polyprotein 1 (2410 aa).

The segment at 1-21 is disordered; the sequence is MEQTLAQAVSRRNKTDTPMAE. The Helicase ATP-binding domain maps to 474–632; the sequence is AMADANNCWS…AARKYPLHVE (159 aa). 487-494 serves as a coordination point for ATP; that stretch reads GHTGSGKS. The DEAH box motif lies at 583-586; it reads DEAH. In terms of domain architecture, Helicase C-terminal spans 647–813; that stretch reads GGGDLLDISK…NVPFYMNETF (167 aa). Residue Tyr1234 is modified to O-(5'-phospho-RNA)-tyrosine. Residues 1359 to 1573 enclose the Peptidase C4 domain; it reads ITLEASTGIL…CGYASHTALF (215 aa). Active-site for nuclear inclusion protein A activity residues include His1404, Asp1440, and Cys1507. In terms of domain architecture, RdRp catalytic spans 1857–1980; the sequence is WLHGSGDGSR…AISPQFDEEF (124 aa). The segment at 2175 to 2200 is disordered; it reads MPTEDDGKLKTPSGARIPSSAADGNW.

It belongs to the bymoviruses polyprotein 1 family. VPg is uridylylated by the polymerase and is covalently attached to the 5'-end of the genomic RNA. This uridylylated form acts as a nucleotide-peptide primer for the polymerase. In terms of processing, the viral RNA1 of bymoviruses is expressed as a single polyprotein which undergoes post-translational proteolytic processing by the main proteinase NIa-pro resulting in the production of at least eight individual proteins.

Its subcellular location is the host cytoplasmic vesicle. It is found in the virion. It catalyses the reaction RNA(n) + a ribonucleoside 5'-triphosphate = RNA(n+1) + diphosphate. It carries out the reaction Hydrolyzes glutaminyl bonds, and activity is further restricted by preferences for the amino acids in P6 - P1' that vary with the species of potyvirus, e.g. Glu-Xaa-Xaa-Tyr-Xaa-Gln-|-(Ser or Gly) for the enzyme from tobacco etch virus. The natural substrate is the viral polyprotein, but other proteins and oligopeptides containing the appropriate consensus sequence are also cleaved.. Its function is as follows. Indispensable for virus replication. In terms of biological role, mediates the cap-independent, EIF4E-dependent translation of viral genomic RNAs. Binds to the cap-binding site of host EIF4E and thus interferes with the host EIF4E-dependent mRNA export and translation. VPg-RNA directly binds EIF4E and is a template for transcription. Also forms trimeric complexes with EIF4E-EIF4G, which are templates for translation. Functionally, has RNA-binding and proteolytic activities. An RNA-dependent RNA polymerase that plays an essential role in the virus replication. The protein is Genome polyprotein 1 of Hordeum vulgare (Barley).